The sequence spans 235 residues: Phosphoribosylaminoimidazole-succinocarboxamide synthase (235 aa).

Belongs to the SAICAR synthetase family.

It carries out the reaction 5-amino-1-(5-phospho-D-ribosyl)imidazole-4-carboxylate + L-aspartate + ATP = (2S)-2-[5-amino-1-(5-phospho-beta-D-ribosyl)imidazole-4-carboxamido]succinate + ADP + phosphate + 2 H(+). Its pathway is purine metabolism; IMP biosynthesis via de novo pathway; 5-amino-1-(5-phospho-D-ribosyl)imidazole-4-carboxamide from 5-amino-1-(5-phospho-D-ribosyl)imidazole-4-carboxylate: step 1/2. This is Phosphoribosylaminoimidazole-succinocarboxamide synthase from Prosthecochloris aestuarii (strain DSM 271 / SK 413).